Consider the following 75-residue polypeptide: MKTGIHPEYVDTTVQCGCGHSFTTRSTKQSGTIVVEVCSQCHPFYTGKQKILDSGGRVARFEKRYGKRNKAAADK.

Residues cysteine 16, cysteine 18, cysteine 38, and cysteine 41 each contribute to the Zn(2+) site.

This sequence belongs to the bacterial ribosomal protein bL31 family. Type A subfamily. Part of the 50S ribosomal subunit. Requires Zn(2+) as cofactor.

Its function is as follows. Binds the 23S rRNA. This is Large ribosomal subunit protein bL31 from Mycolicibacterium smegmatis (strain ATCC 700084 / mc(2)155) (Mycobacterium smegmatis).